Reading from the N-terminus, the 275-residue chain is Large ribosomal subunit protein uL2 (275 aa).

The disordered stretch occupies residues 222–275; the sequence is GVAMNPVDHPHGGGEGRNKGRHPTSPWGQKSKGLKTRNNKRTDSMIIRRRAKKK. The span at 229 to 239 shows a compositional bias: basic and acidic residues; that stretch reads DHPHGGGEGRN.

Belongs to the universal ribosomal protein uL2 family. As to quaternary structure, part of the 50S ribosomal subunit. Forms a bridge to the 30S subunit in the 70S ribosome.

Functionally, one of the primary rRNA binding proteins. Required for association of the 30S and 50S subunits to form the 70S ribosome, for tRNA binding and peptide bond formation. It has been suggested to have peptidyltransferase activity; this is somewhat controversial. Makes several contacts with the 16S rRNA in the 70S ribosome. The sequence is that of Large ribosomal subunit protein uL2 from Psychrobacter arcticus (strain DSM 17307 / VKM B-2377 / 273-4).